A 369-amino-acid polypeptide reads, in one-letter code: Protein-glutamate methylesterase/protein-glutamine glutaminase (369 aa).

The Response regulatory domain occupies 4-121 (KVLVVDDSSF…ARNRDEAVSL (118 aa)). The residue at position 55 (aspartate 55) is a 4-aspartylphosphate. Low complexity predominate over residues 146 to 171 (ATSSARPLASRTAAPAASAPARPATT). The interval 146 to 175 (ATSSARPLASRTAAPAASAPARPATTKFRA) is disordered. Residues 176–369 (SGKKYQLTAI…ERMLVEVGLA (194 aa)) enclose the CheB-type methylesterase domain. Catalysis depends on residues serine 188, histidine 215, and aspartate 311.

It belongs to the CheB family. Phosphorylated by CheA. Phosphorylation of the N-terminal regulatory domain activates the methylesterase activity.

It localises to the cytoplasm. It carries out the reaction [protein]-L-glutamate 5-O-methyl ester + H2O = L-glutamyl-[protein] + methanol + H(+). The catalysed reaction is L-glutaminyl-[protein] + H2O = L-glutamyl-[protein] + NH4(+). Its function is as follows. Involved in chemotaxis. Part of a chemotaxis signal transduction system that modulates chemotaxis in response to various stimuli. Catalyzes the demethylation of specific methylglutamate residues introduced into the chemoreceptors (methyl-accepting chemotaxis proteins or MCP) by CheR. Also mediates the irreversible deamidation of specific glutamine residues to glutamic acid. This Vibrio parahaemolyticus serotype O3:K6 (strain RIMD 2210633) protein is Protein-glutamate methylesterase/protein-glutamine glutaminase.